The primary structure comprises 301 residues: Ribosomal RNA small subunit methyltransferase H (301 aa).

S-adenosyl-L-methionine contacts are provided by residues 31–33 (GGY), D49, F76, D97, and Q104.

It belongs to the methyltransferase superfamily. RsmH family.

It localises to the cytoplasm. It catalyses the reaction cytidine(1402) in 16S rRNA + S-adenosyl-L-methionine = N(4)-methylcytidine(1402) in 16S rRNA + S-adenosyl-L-homocysteine + H(+). Its function is as follows. Specifically methylates the N4 position of cytidine in position 1402 (C1402) of 16S rRNA. This Ehrlichia ruminantium (strain Gardel) protein is Ribosomal RNA small subunit methyltransferase H.